Consider the following 109-residue polypeptide: Cytochrome c (109 aa).

Residues cysteine 25, cysteine 28, histidine 29, and methionine 88 each contribute to the heme c site.

It belongs to the cytochrome c family. Post-translationally, binds 1 heme c group covalently per subunit.

It is found in the mitochondrion intermembrane space. Its function is as follows. Electron carrier protein. The oxidized form of the cytochrome c heme group can accept an electron from the heme group of the cytochrome c1 subunit of cytochrome reductase. Cytochrome c then transfers this electron to the cytochrome oxidase complex, the final protein carrier in the mitochondrial electron-transport chain. The protein is Cytochrome c of Tetrahymena pyriformis.